The primary structure comprises 2364 residues: Spectrin beta chain, non-erythrocytic 1 (2364 aa).

Residue Thr-2 is modified to N-acetylthreonine. The interval 2 to 275 (TTTVATDYDN…IITYVVTYYH (274 aa)) is actin-binding. Ile-14 and Ser-36 each carry phosphoserine. Calponin-homology (CH) domains follow at residues 54–158 (AVQK…LRFQ) and 173–278 (KSAK…HYFS). Lys-90 bears the N6-acetyllysine mark. At Ser-228 the chain carries Phosphoserine. Spectrin repeat units follow at residues 303 to 411 (MIEK…LALR), 423 to 525 (LARR…QRLE), 530 to 636 (LQKI…RLEE), 639 to 742 (RLWK…RLEE), 745 to 847 (LLHQ…ALQD), 850 to 952 (ALYK…DALL), 957 to 1060 (IQNY…SLGE), 1063 to 1166 (KLQQ…NLLS), 1170 to 1258 (AYQQ…DRHR), 1276 to 1376 (DLQK…AQRL), 1381 to 1482 (KAEL…HNLL), 1486 to 1590 (EIHQ…RLEE), 1592 to 1696 (HRAQ…KLDE), 1698 to 1801 (HRLF…TQIL), and 1805 to 1907 (YELH…RVRL). Residues Ser-817, Ser-825, Ser-903, Ser-1057, Ser-1076, Ser-1079, and Ser-1237 each carry the phosphoserine modification. Residues Ser-1388, Ser-1447, and Ser-1557 each carry the phosphoserine modification. The segment at 1563–2093 (IRQRLADLKQ…LLEVRRQQEE (531 aa)) is interaction with ANK2. The residue at position 1805 (Tyr-1805) is a Phosphotyrosine. 3 positions are modified to N6-acetyllysine: Lys-1815, Lys-1913, and Lys-1989. Spectrin repeat units follow at residues 1914 to 2014 (FRFF…EWLR) and 2018 to 2097 (EVHQ…EERK). A disordered region spans residues 2089–2196 (RQQEEEERKR…TLPARTQETP (108 aa)). Ser-2102, Ser-2128, and Ser-2138 each carry phosphoserine. Over residues 2115-2131 (SQQQWDTSKGEQVSQNG) the composition is skewed to polar residues. Over residues 2145 to 2166 (VDTSEMVNGATEQRTSSKESSP) the composition is skewed to polar residues. Thr-2147 is subject to Phosphothreonine. Residue Ser-2148 is modified to Phosphoserine. The tract at residues 2149–2177 (EMVNGATEQRTSSKESSPIPSPTSDRKAK) is mediates interaction with CAMSAP1. Thr-2159 carries the phosphothreonine modification. Phosphoserine is present on residues Ser-2160, Ser-2161, Ser-2164, Ser-2165, and Ser-2169. Thr-2171 carries the phosphothreonine modification. Residues Ser-2172 and Ser-2184 each carry the phosphoserine modification. Positions 2184–2196 (SAATLPARTQETP) are enriched in polar residues. Phosphothreonine is present on residues Thr-2187 and Thr-2195. The region spanning 2197–2307 (SAQMEGFLNR…WIQAISSAIS (111 aa)) is the PH domain. Positions 2309 to 2364 (DKHEVSASTQSTPASSRAQTLPTSVVTITSESSPGKREKDKEKDKEKRFSLFGKKK) are disordered. Residues Ser-2314 and Ser-2319 each carry the phosphoserine modification. The span at 2314 to 2341 (SASTQSTPASSRAQTLPTSVVTITSESS) shows a compositional bias: polar residues. Thr-2320 is modified (phosphothreonine). An O-linked (GlcNAc) serine glycan is attached at Ser-2324. Residue Thr-2328 is modified to Phosphothreonine. Residues Ser-2340 and Ser-2341 each carry the phosphoserine modification. Residues 2342–2357 (PGKREKDKEKDKEKRF) show a composition bias toward basic and acidic residues.

This sequence belongs to the spectrin family. In terms of assembly, interacts with CAMSAP1. Interacts with ANK2. Interacts with CPNE4 (via VWFA domain). Like erythrocyte spectrin, the spectrin-like proteins are capable to form dimers which can further associate to tetramers. Can form heterodimers with SPTAN1. Isoform Short cannot bind to the axonal protein fodaxin. In terms of tissue distribution, isoform 2 is present in brain, lung and kidney (at protein level).

The protein resides in the cytoplasm. The protein localises to the cytoskeleton. Its subcellular location is the myofibril. It localises to the sarcomere. It is found in the m line. The protein resides in the cytosol. The protein localises to the cell membrane. Its function is as follows. Fodrin, which seems to be involved in secretion, interacts with calmodulin in a calcium-dependent manner and is thus candidate for the calcium-dependent movement of the cytoskeleton at the membrane. Plays a critical role in central nervous system development and function. The sequence is that of Spectrin beta chain, non-erythrocytic 1 (SPTBN1) from Homo sapiens (Human).